We begin with the raw amino-acid sequence, 389 residues long: Glutamate 5-kinase (389 aa).

Lysine 17 contacts ATP. Residues serine 57, aspartate 144, and asparagine 156 each contribute to the substrate site. Residue 176 to 177 (SD) coordinates ATP. The PUA domain maps to 282–359 (AGEIHVDAGA…NEIETILGYV (78 aa)).

The protein belongs to the glutamate 5-kinase family.

It is found in the cytoplasm. The catalysed reaction is L-glutamate + ATP = L-glutamyl 5-phosphate + ADP. It participates in amino-acid biosynthesis; L-proline biosynthesis; L-glutamate 5-semialdehyde from L-glutamate: step 1/2. In terms of biological role, catalyzes the transfer of a phosphate group to glutamate to form L-glutamate 5-phosphate. This is Glutamate 5-kinase from Agrobacterium fabrum (strain C58 / ATCC 33970) (Agrobacterium tumefaciens (strain C58)).